Here is a 1096-residue protein sequence, read N- to C-terminus: Centrosome-associated zinc finger protein Cp190 (1096 aa).

The tract at residues 1–209 (MGEVKSVKVD…GDSSNVKQEP (209 aa)) is involved in microtubule and centrosome binding. Residues 30-97 (CDLTLQFRDN…MYTGTLEFEL (68 aa)) form the BTB domain. Positions 126–308 (MENVNRQQRP…PQGTQTQLEH (183 aa)) are disordered. 2 stretches are compositionally biased toward polar residues: residues 175-213 (RANTQRGSTGNTMSRTSGGSNRSPYGDSSNVKQEPTSPF) and 220-230 (YNNNKRPAQTS). S197 and S211 each carry phosphoserine. The segment at 207-271 (QEPTSPFEQL…GDNDPEYDGG (65 aa)) is nuclear localization. An involved in interaction with cliff region spans residues 210 to 245 (TSPFEQLRKGYNNNKRPAQTSLLSPPSKKPSLEEVK). At T229 the chain carries Phosphothreonine. S233 is modified (phosphoserine). Residues 239–252 (PSLEEVKEFAEQQR) show a composition bias toward basic and acidic residues. Positions 245 to 468 (KEFAEQQRMR…IAQGAENTTG (224 aa)) are centrosomal targeting M domain involved in interaction with ZIPIC. A compositionally biased stretch (low complexity) spans 292 to 305 (STSKQQSPQGTQTQ). Phosphoserine occurs at positions 298 and 319. The tract at residues 309–390 (GSTTIILKQD…KPPANQSSAT (82 aa)) is involved in interaction with cliff. Positions 366–449 (NTPAAPTEKS…ANTAAAQKRR (84 aa)) are disordered. The interval 385–508 (NQSSATTSPH…KETIDPALCE (124 aa)) is centrosomal localization and interaction with microtubules. Positions 412 to 445 (AQQKAASSQQKSGTSQTTGNQGTGANPPANTAAA) are enriched in low complexity. 2 consecutive C2H2-type zinc fingers follow at residues 538–561 (AECALCNQSYRTKGELEAHINEVH) and 567–590 (QQCIYCNKVFEQELQLYRHMKSYH). T603 carries the phosphothreonine modification. A compositionally biased stretch (acidic residues) spans 608–625 (LGSQDEEEEAEGDEEQEP). The tract at residues 608–630 (LGSQDEEEEAEGDEEQEPEQTGK) is disordered. S610, S708, and S723 each carry phosphoserine. Positions 710 to 733 (PEAEHVKQETDEKSLAGTEEEYDD) are disordered. The segment covering 711 to 723 (EAEHVKQETDEKS) has biased composition (basic and acidic residues). Residue T727 is modified to Phosphothreonine. Phosphoserine is present on residues S745, S748, S757, and S760. Positions 770–927 (LIAESEEQSN…EDSPIPHSDS (158 aa)) are disordered. Residues 777-799 (QSNKEPKSDKPRDDISEKLKELT) are compositionally biased toward basic and acidic residues. The span at 802-812 (WTEDENDDDVD) shows a compositional bias: acidic residues. T817 carries the phosphothreonine modification. Basic and acidic residues-rich tracts occupy residues 825-834 (ANKDPEPTVH), 849-861 (KGPEEATEEKASE), 882-907 (EKMDVDSEAADEKASKAEVQIKKEAE), and 914-927 (EFIKEDSPIPHSDS). S920, S925, and S927 each carry phosphoserine. Residue T936 is modified to Phosphothreonine. The residue at position 938 (S938) is a Phosphoserine. Basic and acidic residues-rich tracts occupy residues 960–973 (IAEAEKPDQEKDIV) and 1011–1035 (AAEKAAENNEDTRTADEKEAVEDKP). The tract at residues 960–1096 (IAEAEKPDQE…GVSAAAKEEL (137 aa)) is disordered. 2 positions are modified to phosphoserine: S1071 and S1074. Over residues 1076 to 1086 (WGDDDEDEDEN) the composition is skewed to acidic residues.

Homodimerizes via the N-terminal BTB domain. Component of the gypsy chromatin insulator complex, composed of Cp190, mod(mdg4) and su(Hw). The gypsy chromatin insulator complex interacts with Topors via mod(mdg4) and su(Hw). Interacts with Cp60. Interacts with inv. Interacts with Nup98. Interacts (via BTB domain) with pita (via region between the ZAD domain and the first zinc finger domain); the interaction is direct. Interacts with ZIPIC (via region between the ZAD domain and the first zinc finger domain); the interaction is direct. Interacts (via regions between the BTB domain and first zinc finger domain) with cliff (via regions flanking MADF domain 1); the interaction is probably direct. Associates (via N-terminus) with microtubules; the interaction is direct, is enhanced by dimerization and involves multiple regions within the N-terminus. Microtubule association is enriched at growing plus ends. As to expression, expressed in spermatids but not in mature spermatozoa. Localizes within the spermatids to a sheath of microtubules around the nucleus and to microtubules within the tail.

The protein resides in the nucleus. It localises to the cytoplasm. It is found in the cytoskeleton. The protein localises to the microtubule organizing center. Its subcellular location is the centrosome. The protein resides in the chromosome. It localises to the nucleoplasm. Functionally, plays a central role in chromatin domain organization and boundary function through recruitment by a range of insulator DNA-binding proteins, including ZIPIC, pita, CTCF, su(Hw), cliff and others. Together with pita and CTCF cooperatively binds to and regulates the activity of the Miscadastral pigmentation (MCP) insulator. Cooperatively recruited to the front-ultraabdominal (Fub) boundary by pita, su(Hw) and cliff. Recruitment of Cp190 together with Chro/chromator induces chromatin decondensation. Component of the gypsy chromatin insulator complex which is required for the function of the gypsy chromatin insulator and other endogenous chromatin insulators. Chromatin insulators are regulatory elements that establish independent domains of transcriptional activity within eukaryotic genomes. Insulators have two defining properties; they can block the communication between an enhancer and a promoter when placed between them and can also buffer transgenes from position effect variegation (PEV). Insulators are proposed to structure the chromatin fiber into independent domains of differing transcriptional potential by promoting the formation of distinct chromatin loops to form topologically associating domains (TADs). This chromatin looping may involve the formation of insulator bodies, where homotypic interactions between individual subunits of the insulator complex could promote the clustering of widely spaced insulators at the nuclear periphery. Within the gypsy insulator complex, this protein may directly bind to insulator DNA at sites distinct from those recognized by su(Hw). Required during embryogenesis for axial expansion, an actin/myosin dependent process that distributes the dividing nuclei along the anterior-posterior axis of the syncytial embryo. Associates with centrosomes and interphase microtubules during mitosis, and recruits CP60; may have a role in maintaining centrosome and spindle integrity. This Drosophila melanogaster (Fruit fly) protein is Centrosome-associated zinc finger protein Cp190.